We begin with the raw amino-acid sequence, 405 residues long: Na(+)-translocating NADH-quinone reductase subunit F (405 aa).

The helical transmembrane segment at 3–23 (IILGIVMFTVIVLVLALMILF) threads the bilayer. In terms of domain architecture, 2Fe-2S ferredoxin-type spans 32–124 (GDITIKVNGE…DMDIEVPEEV (93 aa)). [2Fe-2S] cluster is bound by residues Cys67, Cys73, Cys76, and Cys108. An FAD-binding FR-type domain is found at 127–267 (VKKWECTVIS…SGPFGEFFAK (141 aa)). The catalytic stretch occupies residues 270-387 (DAEMVFIGGG…PIMNQSVIKM (118 aa)).

The protein belongs to the NqrF family. As to quaternary structure, composed of six subunits; NqrA, NqrB, NqrC, NqrD, NqrE and NqrF. Requires [2Fe-2S] cluster as cofactor. FAD serves as cofactor.

It is found in the cell inner membrane. The catalysed reaction is a ubiquinone + n Na(+)(in) + NADH + H(+) = a ubiquinol + n Na(+)(out) + NAD(+). NQR complex catalyzes the reduction of ubiquinone-1 to ubiquinol by two successive reactions, coupled with the transport of Na(+) ions from the cytoplasm to the periplasm. The first step is catalyzed by NqrF, which accepts electrons from NADH and reduces ubiquinone-1 to ubisemiquinone by a one-electron transfer pathway. The polypeptide is Na(+)-translocating NADH-quinone reductase subunit F (Neisseria meningitidis serogroup B (strain ATCC BAA-335 / MC58)).